A 324-amino-acid chain; its full sequence is Acetyl-coenzyme A carboxylase carboxyl transferase subunit alpha (324 aa).

The 255-residue stretch at 37–291 (KLDKRLDRLK…QEYVLQEWLK (255 aa)) folds into the CoA carboxyltransferase C-terminal domain.

This sequence belongs to the AccA family. As to quaternary structure, acetyl-CoA carboxylase is a heterohexamer composed of biotin carboxyl carrier protein (AccB), biotin carboxylase (AccC) and two subunits each of ACCase subunit alpha (AccA) and ACCase subunit beta (AccD).

The protein resides in the cytoplasm. The enzyme catalyses N(6)-carboxybiotinyl-L-lysyl-[protein] + acetyl-CoA = N(6)-biotinyl-L-lysyl-[protein] + malonyl-CoA. It functions in the pathway lipid metabolism; malonyl-CoA biosynthesis; malonyl-CoA from acetyl-CoA: step 1/1. Its function is as follows. Component of the acetyl coenzyme A carboxylase (ACC) complex. First, biotin carboxylase catalyzes the carboxylation of biotin on its carrier protein (BCCP) and then the CO(2) group is transferred by the carboxyltransferase to acetyl-CoA to form malonyl-CoA. This Chlamydia trachomatis serovar D (strain ATCC VR-885 / DSM 19411 / UW-3/Cx) protein is Acetyl-coenzyme A carboxylase carboxyl transferase subunit alpha.